Here is a 361-residue protein sequence, read N- to C-terminus: Queuine tRNA-ribosyltransferase (361 aa).

Asp89 functions as the Proton acceptor in the catalytic mechanism. Substrate-binding positions include 89 to 93 (DSGGF), Asp143, Gln185, and Gly212. The segment at 243–249 (GVGTPED) is RNA binding. Residue Asp262 is the Nucleophile of the active site. Residues 267–271 (TRNAR) are RNA binding; important for wobble base 34 recognition. The Zn(2+) site is built by Cys300, Cys302, Cys305, and His331.

It belongs to the queuine tRNA-ribosyltransferase family. Homodimer. Within each dimer, one monomer is responsible for RNA recognition and catalysis, while the other monomer binds to the replacement base PreQ1. It depends on Zn(2+) as a cofactor.

It carries out the reaction 7-aminomethyl-7-carbaguanine + guanosine(34) in tRNA = 7-aminomethyl-7-carbaguanosine(34) in tRNA + guanine. Its pathway is tRNA modification; tRNA-queuosine biosynthesis. Catalyzes the base-exchange of a guanine (G) residue with the queuine precursor 7-aminomethyl-7-deazaguanine (PreQ1) at position 34 (anticodon wobble position) in tRNAs with GU(N) anticodons (tRNA-Asp, -Asn, -His and -Tyr). Catalysis occurs through a double-displacement mechanism. The nucleophile active site attacks the C1' of nucleotide 34 to detach the guanine base from the RNA, forming a covalent enzyme-RNA intermediate. The proton acceptor active site deprotonates the incoming PreQ1, allowing a nucleophilic attack on the C1' of the ribose to form the product. After dissociation, two additional enzymatic reactions on the tRNA convert PreQ1 to queuine (Q), resulting in the hypermodified nucleoside queuosine (7-(((4,5-cis-dihydroxy-2-cyclopenten-1-yl)amino)methyl)-7-deazaguanosine). In Nitrosomonas eutropha (strain DSM 101675 / C91 / Nm57), this protein is Queuine tRNA-ribosyltransferase.